Here is a 544-residue protein sequence, read N- to C-terminus: Peptide chain release factor 3 (544 aa).

The tr-type G domain occupies 17–286; that stretch reads EKRRNFAIIS…SFLDYGLAPR (270 aa). GTP is bound by residues 26–33, 94–98, and 148–151; these read SHPDAGKT, DTPGH, and NKMD.

Belongs to the TRAFAC class translation factor GTPase superfamily. Classic translation factor GTPase family. PrfC subfamily.

Its subcellular location is the cytoplasm. Its function is as follows. Increases the formation of ribosomal termination complexes and stimulates activities of RF-1 and RF-2. It binds guanine nucleotides and has strong preference for UGA stop codons. It may interact directly with the ribosome. The stimulation of RF-1 and RF-2 is significantly reduced by GTP and GDP, but not by GMP. This chain is Peptide chain release factor 3, found in Microcystis aeruginosa (strain NIES-843 / IAM M-2473).